The following is a 207-amino-acid chain: Cytochrome c oxidase subunit 3 (207 aa).

Helical transmembrane passes span 30–50 (FWLFLGGETVLFASLFATFLA), 67–87 (VTLVFIATMLLLTSSLTSVYA), 101–121 (LWLGITILLGAGFLGLEIYEF), 144–164 (LVGTHGAHVAFGLMWISTLMI), and 186–206 (WHFIDVVWVFIFTVVYLMGMV).

Belongs to the cytochrome c oxidase subunit 3 family.

The protein resides in the cell membrane. The catalysed reaction is 4 Fe(II)-[cytochrome c] + O2 + 8 H(+)(in) = 4 Fe(III)-[cytochrome c] + 2 H2O + 4 H(+)(out). In Bacillus subtilis (strain 168), this protein is Cytochrome c oxidase subunit 3 (ctaE).